The following is a 259-amino-acid chain: Global transcriptional regulator CodY (259 aa).

The segment at 1–155 (MNLLEKTRKI…GATVVGMEIL (155 aa)) is GAF domain. Positions 203–222 (ASKIADRVGITRSVIVNALR) form a DNA-binding region, H-T-H motif. Position 215 is a phosphoserine (S215).

Belongs to the CodY family.

It is found in the cytoplasm. Its function is as follows. DNA-binding global transcriptional regulator which is involved in the adaptive response to starvation and acts by directly or indirectly controlling the expression of numerous genes in response to nutrient availability. During rapid exponential growth, CodY is highly active and represses genes whose products allow adaptation to nutrient depletion. This Geobacillus kaustophilus (strain HTA426) protein is Global transcriptional regulator CodY.